The primary structure comprises 203 residues: Akirin-2 (203 aa).

2 positions are modified to phosphoserine: Ser-18 and Ser-21. A Nuclear localization signal motif is present at residues 22-27 (PKRRRC). Ser-57 is modified (phosphoserine). The segment at 115–137 (PHAFLLSGPASPGTPSGTSSPLK) is disordered. The span at 119–135 (LLSGPASPGTPSGTSSP) shows a compositional bias: low complexity. The SYVS motif signature appears at 200–203 (SYVS).

It belongs to the akirin family. As to quaternary structure, homodimer. Interacts with IPO9; the interaction is direct. Associates with 20S and 26S proteasomes. Interacts with SMARCD1; promoting SWI/SNF complex recruitment. Interacts with NFKBIZ. Interacts with YWHAB. Polyubiquitinated. Polyubiquitination is dependent of UBR5 that extends pre-ubiquitinated AKIRIN2.

The protein resides in the nucleus. It is found in the cytoplasm. The protein localises to the membrane. In terms of biological role, molecular adapter that acts as a bridge between a variety of multiprotein complexes, and which is involved in embryonic development, immunity, myogenesis and brain development. Plays a key role in nuclear protein degradation by promoting import of proteasomes into the nucleus: directly binds to fully assembled 20S proteasomes at one end and to nuclear import receptor IPO9 at the other end, bridging them together and mediating the import of pre-assembled proteasome complexes through the nuclear pore. Involved in innate immunity by regulating the production of interleukin-6 (IL6) downstream of Toll-like receptor (TLR): acts by bridging the NF-kappa-B inhibitor NFKBIZ and the SWI/SNF complex, leading to promote induction of IL6. Also involved in adaptive immunity by promoting B-cell activation. Involved in brain development: required for the survival and proliferation of cerebral cortical progenitor cells. Involved in myogenesis: required for skeletal muscle formation and skeletal development, possibly by regulating expression of muscle differentiation factors. This is Akirin-2 from Bos taurus (Bovine).